The sequence spans 400 residues: D-alanyl-D-alanine carboxypeptidase DacC (400 aa).

The N-terminal stretch at 1–27 (MTQYSSLLRGLAAGSAFLFLFAPTAFA) is a signal peptide. Ser-66 functions as the Acyl-ester intermediate in the catalytic mechanism. Residue Lys-69 is the Proton acceptor of the active site. The active site involves Ser-132. Lys-235 provides a ligand contact to substrate. The tract at residues 383–400 (VWDFVMMKFHQWFGSWFS) is required for inner membrane binding.

This sequence belongs to the peptidase S11 family.

It localises to the cell inner membrane. It catalyses the reaction Preferential cleavage: (Ac)2-L-Lys-D-Ala-|-D-Ala. Also transpeptidation of peptidyl-alanyl moieties that are N-acyl substituents of D-alanine.. The protein operates within cell wall biogenesis; peptidoglycan biosynthesis. Removes C-terminal D-alanyl residues from sugar-peptide cell wall precursors. This Escherichia coli (strain K12) protein is D-alanyl-D-alanine carboxypeptidase DacC (dacC).